The primary structure comprises 60 residues: Homeobox protein CHOX-CAD2 (60 aa).

The homeobox DNA-binding region spans 1–60; the sequence is KEKYRVVYTDHQRLELEKEFHCNRYITIRRKSELAVNLGLSERQVKSWFQNRRAKERKII.

It belongs to the Caudal homeobox family.

It localises to the nucleus. This is Homeobox protein CHOX-CAD2 (CHOX-CAD2) from Gallus gallus (Chicken).